The following is a 480-amino-acid chain: Glutamyl-tRNA(Gln) amidotransferase subunit A (480 aa).

Residues lysine 74 and serine 149 each act as charge relay system in the active site. The active-site Acyl-ester intermediate is serine 173.

Belongs to the amidase family. GatA subfamily. As to quaternary structure, heterotrimer of A, B and C subunits.

It catalyses the reaction L-glutamyl-tRNA(Gln) + L-glutamine + ATP + H2O = L-glutaminyl-tRNA(Gln) + L-glutamate + ADP + phosphate + H(+). Its function is as follows. Allows the formation of correctly charged Gln-tRNA(Gln) through the transamidation of misacylated Glu-tRNA(Gln) in organisms which lack glutaminyl-tRNA synthetase. The reaction takes place in the presence of glutamine and ATP through an activated gamma-phospho-Glu-tRNA(Gln). The protein is Glutamyl-tRNA(Gln) amidotransferase subunit A of Prochlorococcus marinus (strain MIT 9312).